We begin with the raw amino-acid sequence, 321 residues long: CRISPR-associated endonuclease Cas1 2 (321 aa).

Glu-150, His-213, and Glu-228 together coordinate Mn(2+).

The protein belongs to the CRISPR-associated endonuclease Cas1 family. As to quaternary structure, homodimer, forms a heterotetramer with a Cas2 homodimer. Mg(2+) serves as cofactor. Mn(2+) is required as a cofactor.

CRISPR (clustered regularly interspaced short palindromic repeat), is an adaptive immune system that provides protection against mobile genetic elements (viruses, transposable elements and conjugative plasmids). CRISPR clusters contain spacers, sequences complementary to antecedent mobile elements, and target invading nucleic acids. CRISPR clusters are transcribed and processed into CRISPR RNA (crRNA). Acts as a dsDNA endonuclease. Involved in the integration of spacer DNA into the CRISPR cassette. This Moorella thermoacetica (strain ATCC 39073 / JCM 9320) protein is CRISPR-associated endonuclease Cas1 2.